Reading from the N-terminus, the 254-residue chain is Major prion protein (254 aa).

The first 22 residues, 1–22 (MANLSYWLLALFVATWTDVGLC), serve as a signal peptide directing secretion. An interaction with GRB2, ERI3 and SYN1 region spans residues 23–231 (KKRPKPGGWN…SQAYYDGRRS (209 aa)). The disordered stretch occupies residues 25–104 (RPKPGGWNTG…THNQWNKPSK (80 aa)). 5 repeat units span residues 51–59 (PQGGGTWGQ), 60–67 (PHGGGWGQ), 68–75 (PHGGGWGQ), 76–83 (PHGGGWGQ), and 84–91 (PHGGGWGQ). Positions 51–91 (PQGGGTWGQPHGGGWGQPHGGGWGQPHGGGWGQPHGGGWGQ) are 5 X 8 AA tandem repeats of P-H-G-G-G-W-G-Q. Positions 52-95 (QGGGTWGQPHGGGWGQPHGGGWGQPHGGGWGQPHGGGWGQGGGT) are enriched in gly residues. His-61, Gly-62, Gly-63, His-69, Gly-70, Gly-71, His-77, Gly-78, Gly-79, His-85, Gly-86, and Gly-87 together coordinate Cu(2+). Residues 90–231 (GQGGGTHNQW…SQAYYDGRRS (142 aa)) form a prP27-30 (protease resistant core) region. An intrachain disulfide couples Cys-179 to Cys-214. N-linked (GlcNAc...) asparagine glycosylation is found at Asn-181 and Asn-197. The GPI-anchor amidated serine moiety is linked to residue Ser-231. Residues 232–254 (SAVLFSSPPVILLISFLIFLIVG) constitute a propeptide, removed in mature form.

This sequence belongs to the prion family. In terms of assembly, monomer and homodimer. Has a tendency to aggregate into amyloid fibrils containing a cross-beta spine, formed by a steric zipper of superposed beta-strands. Soluble oligomers may represent an intermediate stage on the path to fibril formation. Copper binding may promote oligomerization. Interacts with GRB2, APP, ERI3/PRNPIP and SYN1. Mislocalized cytosolically exposed PrP interacts with MGRN1; this interaction alters MGRN1 subcellular location and causes lysosomal enlargement. Interacts with KIAA1191.

It is found in the cell membrane. The protein localises to the golgi apparatus. Its function is as follows. Its primary physiological function is unclear. Has cytoprotective activity against internal or environmental stresses. May play a role in neuronal development and synaptic plasticity. May be required for neuronal myelin sheath maintenance. May play a role in iron uptake and iron homeostasis. Soluble oligomers are toxic to cultured neuroblastoma cells and induce apoptosis (in vitro). Association with GPC1 (via its heparan sulfate chains) targets PRNP to lipid rafts. Also provides Cu(2+) or Zn(2+) for the ascorbate-mediated GPC1 deaminase degradation of its heparan sulfate side chains. This chain is Major prion protein (PRNP), found in Cricetulus griseus (Chinese hamster).